The chain runs to 269 residues: 3-methyl-2-oxobutanoate hydroxymethyltransferase (269 aa).

Residues D43 and D82 each coordinate Mg(2+). 3-methyl-2-oxobutanoate-binding positions include 43–44 (DS), D82, and K110. E112 is a Mg(2+) binding site. Catalysis depends on E179, which acts as the Proton acceptor.

This sequence belongs to the PanB family. In terms of assembly, homodecamer; pentamer of dimers. Requires Mg(2+) as cofactor.

It localises to the cytoplasm. The catalysed reaction is 3-methyl-2-oxobutanoate + (6R)-5,10-methylene-5,6,7,8-tetrahydrofolate + H2O = 2-dehydropantoate + (6S)-5,6,7,8-tetrahydrofolate. The protein operates within cofactor biosynthesis; (R)-pantothenate biosynthesis; (R)-pantoate from 3-methyl-2-oxobutanoate: step 1/2. Its function is as follows. Catalyzes the reversible reaction in which hydroxymethyl group from 5,10-methylenetetrahydrofolate is transferred onto alpha-ketoisovalerate to form ketopantoate. This chain is 3-methyl-2-oxobutanoate hydroxymethyltransferase, found in Acinetobacter baumannii (strain SDF).